A 141-amino-acid chain; its full sequence is Protein X (141 aa).

A compositionally biased stretch (low complexity) spans 24-48 (QSSGPSFPRPAAGSAASSASSPSPS). Residues 24 to 52 (QSSGPSFPRPAAGSAASSASSPSPSDESD) form a disordered region. A mitochondrial targeting sequence region spans residues 68 to 113 (PCCLVFTCAELRTMDSTVNFVSWHANRQLGMPSKDLWTPYIKDQLL).

It belongs to the orthohepadnavirus protein X family. As to quaternary structure, may form homodimer. May interact with host CEBPA, CFLAR, CREB1, DDB1, E4F1, HBXIP, HSPD1/HSP60, NFKBIA, POLR2E and SMAD4. Interacts with host SMC5-SMC6 complex and induces its degradation. Interacts with host TRPC4AP; leading to prevent ubiquitination of TRPC4AP. Interacts with host PLSCR1; this interaction promotes ubiquitination and degradation of HBx and impairs HBx-mediated cell proliferation. In terms of processing, a fraction may be phosphorylated in insect cells and HepG2 cells, a human hepatoblastoma cell line. Phosphorylated in vitro by host protein kinase C or mitogen-activated protein kinase. N-acetylated in insect cells.

Its subcellular location is the host cytoplasm. It localises to the host nucleus. It is found in the host mitochondrion. Multifunctional protein that plays a role in silencing host antiviral defenses and promoting viral transcription. Does not seem to be essential for HBV infection. May be directly involved in development of cirrhosis and liver cancer (hepatocellular carcinoma). Most of cytosolic activities involve modulation of cytosolic calcium. The effect on apoptosis is controversial depending on the cell types in which the studies have been conducted. May induce apoptosis by localizing in mitochondria and causing loss of mitochondrial membrane potential. May also modulate apoptosis by binding host CFLAR, a key regulator of the death-inducing signaling complex (DISC). Promotes viral transcription by using the host E3 ubiquitin ligase DDB1 to target the SMC5-SMC6 complex to proteasomal degradation. This host complex would otherwise bind to viral episomal DNA, and prevents its transcription. Moderately stimulates transcription of many different viral and cellular transcription elements. Promoters and enhancers stimulated by HBx contain DNA binding sites for NF-kappa-B, AP-1, AP-2, c-EBP, ATF/CREB, or the calcium-activated factor NF-AT. The chain is Protein X from Woodchuck hepatitis B virus (isolate 7) (WHV).